Reading from the N-terminus, the 288-residue chain is Serine/threonine-protein phosphatase PGAM5, mitochondrial (288 aa).

Residues 1–6 (MAFRQA) are Mitochondrial matrix-facing. Residues 7 to 29 (LQLAACGLAGGSAAVLFSAVAVG) form a helical membrane-spanning segment. The Mitochondrial intermembrane segment spans residues 30–288 (KPRAGGDADT…FMPPDKITRS (259 aa)). An interaction with KEAP1 region spans residues 76 to 81 (NVEFGE). Serine 86 carries the phosphoserine modification. 3 positions are modified to N6-acetyllysine: lysine 115, lysine 143, and lysine 190.

Belongs to the phosphoglycerate mutase family. BPG-dependent PGAM subfamily. As to quaternary structure, dimer. Forms a ternary complex with NFE2L2 and KEAP1. Interacts with BCL2L1 and MAP3K5. Upon TNF-induced necrosis, forms in complex with RIPK1, RIPK3 and MLKL; the formation of this complex leads to PGAM5 phosphorylation. Isoform 2, but not isoform 1, interacts with DNM1L; this interaction leads to DNM1L dephosphorylation and activation and eventually to mitochondria fragmentation. Phosphorylated by the RIPK1/RIPK3 complex under necrotic conditions. This phosphorylation increases PGAM5 phosphatase activity. Post-translationally, proteolytically cleaved by PARL in response to loss of mitochondrial membrane potential.

It localises to the mitochondrion outer membrane. Its subcellular location is the mitochondrion inner membrane. It catalyses the reaction O-phospho-L-seryl-[protein] + H2O = L-seryl-[protein] + phosphate. The catalysed reaction is O-phospho-L-threonyl-[protein] + H2O = L-threonyl-[protein] + phosphate. Mitochondrial serine/threonine phosphatase that dephosphorylates various substrates and thus plays a role in different biological processes including cellular senescence or mitophagy. Modulates cellular senescence by regulating mitochondrial dynamics. Mechanistically, participates in mitochondrial fission through dephosphorylating DNM1L/DRP1. Additionally, dephosphorylates MFN2 in a stress-sensitive manner and consequently protects it from ubiquitination and degradation to promote mitochondrial network formation. Regulates mitophagy independent of PARKIN by interacting with and dephosphorylating FUNDC1, which interacts with LC3. Regulates anti-oxidative response by forming a tertiary complex with KEAP1 and NRF2. Regulates necroptosis by acting as a RIPK3 target and recruiting the RIPK1-RIPK3-MLKL necrosis 'attack' complex to mitochondria. The protein is Serine/threonine-protein phosphatase PGAM5, mitochondrial (Pgam5) of Rattus norvegicus (Rat).